A 341-amino-acid chain; its full sequence is Ribosomal RNA small subunit methyltransferase H (341 aa).

S-adenosyl-L-methionine is bound by residues 47–49 (GGY), Asp-64, Phe-91, Asp-109, and Gln-116. The tract at residues 292–318 (VAASEDEASRNPRARSAKLRAGVRTPA) is disordered.

The protein belongs to the methyltransferase superfamily. RsmH family.

It localises to the cytoplasm. The enzyme catalyses cytidine(1402) in 16S rRNA + S-adenosyl-L-methionine = N(4)-methylcytidine(1402) in 16S rRNA + S-adenosyl-L-homocysteine + H(+). Functionally, specifically methylates the N4 position of cytidine in position 1402 (C1402) of 16S rRNA. The chain is Ribosomal RNA small subunit methyltransferase H from Sinorhizobium fredii (strain NBRC 101917 / NGR234).